The chain runs to 230 residues: Cytochrome c oxidase subunit 2 (230 aa).

Residues 1–29 are Mitochondrial intermembrane-facing; that stretch reads NNFFQGYNLLFQHSLFASYMDWFHAFNCS. Residues 30–50 traverse the membrane as a helical segment; the sequence is LLLGVLVFVTLLFGYLIFSTF. The Mitochondrial matrix portion of the chain corresponds to 51–63; that stretch reads YFKSKKIEYQFGE. Residues 64–84 traverse the membrane as a helical segment; that stretch reads LLCSIFPTIILLMQMVPSLSL. Topologically, residues 85–230 are mitochondrial intermembrane; sequence LYYYGLMNLD…FKSWCFGTME (146 aa). Positions 163, 198, 200, 202, 206, and 209 each coordinate Cu cation. Glu200 provides a ligand contact to Mg(2+).

Belongs to the cytochrome c oxidase subunit 2 family. In terms of assembly, component of the cytochrome c oxidase (complex IV, CIV), a multisubunit enzyme composed of a catalytic core of 3 subunits and several supernumerary subunits. The complex exists as a monomer or a dimer and forms supercomplexes (SCs) in the inner mitochondrial membrane with ubiquinol-cytochrome c oxidoreductase (cytochrome b-c1 complex, complex III, CIII). It depends on Cu cation as a cofactor.

It localises to the mitochondrion inner membrane. The enzyme catalyses 4 Fe(II)-[cytochrome c] + O2 + 8 H(+)(in) = 4 Fe(III)-[cytochrome c] + 2 H2O + 4 H(+)(out). Functionally, component of the cytochrome c oxidase, the last enzyme in the mitochondrial electron transport chain which drives oxidative phosphorylation. The respiratory chain contains 3 multisubunit complexes succinate dehydrogenase (complex II, CII), ubiquinol-cytochrome c oxidoreductase (cytochrome b-c1 complex, complex III, CIII) and cytochrome c oxidase (complex IV, CIV), that cooperate to transfer electrons derived from NADH and succinate to molecular oxygen, creating an electrochemical gradient over the inner membrane that drives transmembrane transport and the ATP synthase. Cytochrome c oxidase is the component of the respiratory chain that catalyzes the reduction of oxygen to water. Electrons originating from reduced cytochrome c in the intermembrane space (IMS) are transferred via the dinuclear copper A center (CU(A)) of subunit 2 and heme A of subunit 1 to the active site in subunit 1, a binuclear center (BNC) formed by heme A3 and copper B (CU(B)). The BNC reduces molecular oxygen to 2 water molecules using 4 electrons from cytochrome c in the IMS and 4 protons from the mitochondrial matrix. The protein is Cytochrome c oxidase subunit 2 (cox-2) of Caenorhabditis remanei (Caenorhabditis vulgaris).